Reading from the N-terminus, the 784-residue chain is Serine/threonine-protein kinase DCLK2 (784 aa).

Residues 1–45 form a disordered region; that stretch reads MASTRSIELEHFEERDKRPRPGSRRGAPSSSGGSSSSGPKGNGLI. The span at 7-19 shows a compositional bias: basic and acidic residues; that stretch reads IELEHFEERDKRP. Low complexity predominate over residues 24-39; sequence RRGAPSSSGGSSSSGP. T61 is subject to Phosphothreonine. 2 Doublecortin domains span residues 72–158 and 197–280; these read KKAR…VDYT and KLVT…AQDD. Composition is skewed to low complexity over residues 300-312 and 341-364; these read AVKYSGSKSPGPS and TPSSQLSTPKSTKSSSSSPTSPGS. Residues 300-368 are disordered; it reads AVKYSGSKSP…PTSPGSFRGL (69 aa). Residue S379 is modified to Phosphoserine. Residues 411 to 668 form the Protein kinase domain; it reads YKIGKVIGDG…AGEILSHPWV (258 aa). ATP contacts are provided by residues 417–425 and K440; that span reads IGDGNFAVV. D532 functions as the Proton acceptor in the catalytic mechanism. S664 carries the phosphoserine modification. Phosphothreonine is present on T683. A disordered region spans residues 724–784; that stretch reads CQDSSRPGME…RAGTWRRHRD (61 aa). The span at 741–758 shows a compositional bias: low complexity; sequence SASAEEPPVSAPAAAPAP.

Belongs to the protein kinase superfamily. CAMK Ser/Thr protein kinase family. CaMK subfamily. In terms of assembly, binds to and stabilizes microtubules. Interacts with MAPK8IP1/JIP-1, MAPK8IP2/JIP-2, MAPK9/JNK2, PPP1R9B/NEURABIN-2 and actin. Autophosphorylated.

The protein resides in the cytoplasm. The protein localises to the cytoskeleton. The enzyme catalyses L-seryl-[protein] + ATP = O-phospho-L-seryl-[protein] + ADP + H(+). It catalyses the reaction L-threonyl-[protein] + ATP = O-phospho-L-threonyl-[protein] + ADP + H(+). Its function is as follows. Protein kinase with a significantly reduced Ca(2+)/CAM affinity and dependence compared to other members of the CaMK family. May play a role in the down-regulation of CRE-dependent gene activation probably by phosphorylation of the CREB coactivator CRTC2/TORC2 and the resulting retention of TORC2 in the cytoplasm. This Ailuropoda melanoleuca (Giant panda) protein is Serine/threonine-protein kinase DCLK2 (DCLK2).